The following is a 514-amino-acid chain: Membrane-bound lytic murein transglycosylase F (514 aa).

An N-terminal signal peptide occupies residues 1 to 30 (MKKLKINYLFIGILTLLLAAALWPSIPWFG). Residues 31–269 (KTENHIAAIQ…RIEEKYLGHG (239 aa)) are non-LT domain. Residues 270-514 (DDFDYVDTRS…LFTPQKKEEK (245 aa)) form an LT domain region. Glu314 is an active-site residue.

This sequence in the N-terminal section; belongs to the bacterial solute-binding protein 3 family. It in the C-terminal section; belongs to the transglycosylase Slt family.

The protein localises to the cell outer membrane. It carries out the reaction Exolytic cleavage of the (1-&gt;4)-beta-glycosidic linkage between N-acetylmuramic acid (MurNAc) and N-acetylglucosamine (GlcNAc) residues in peptidoglycan, from either the reducing or the non-reducing ends of the peptidoglycan chains, with concomitant formation of a 1,6-anhydrobond in the MurNAc residue.. Murein-degrading enzyme that degrades murein glycan strands and insoluble, high-molecular weight murein sacculi, with the concomitant formation of a 1,6-anhydromuramoyl product. Lytic transglycosylases (LTs) play an integral role in the metabolism of the peptidoglycan (PG) sacculus. Their lytic action creates space within the PG sacculus to allow for its expansion as well as for the insertion of various structures such as secretion systems and flagella. The chain is Membrane-bound lytic murein transglycosylase F from Salmonella choleraesuis (strain SC-B67).